The following is a 297-amino-acid chain: Thiosulfate sulfurtransferase (297 aa).

An N6-acetyllysine; alternate modification is found at Lys-14. At Lys-14 the chain carries N6-succinyllysine; alternate. A Rhodanese 1 domain is found at 25–143; that stretch reads LGPSLRVLDA…WLKEGHPVTS (119 aa). A glycan (O-linked (GlcNAc) serine) is linked at Ser-35. Position 38 is a phosphoserine (Ser-38). An N6-acetyllysine; alternate modification is found at Lys-136. N6-succinyllysine; alternate is present on Lys-136. Positions 144–159 are hinge; the sequence is EPSRPEPAVFKATLNL. Lys-163 bears the N6-acetyllysine mark. Residues 173 to 288 enclose the Rhodanese 2 domain; it reads QSKRFQLVDS…WFRRAPPETR (116 aa). Lys-175 carries the N6-acetyllysine; alternate modification. Lys-175 carries the N6-succinyllysine; alternate modification. Arg-187 is a substrate binding site. An N6-acetyllysine; alternate mark is found at Lys-219 and Lys-224. Residues Lys-219 and Lys-224 each carry the N6-succinyllysine; alternate modification. Lys-236 bears the N6-acetyllysine mark. N6-acetyllysine; alternate is present on Lys-237. Lys-237 is subject to N6-succinyllysine; alternate. Cys-248 serves as the catalytic Cysteine persulfide intermediate. Lys-250 serves as a coordination point for substrate.

Monomer. As to expression, expressed in numerous tissues.

Its subcellular location is the mitochondrion matrix. The enzyme catalyses thiosulfate + hydrogen cyanide = thiocyanate + sulfite + 2 H(+). Its function is as follows. Together with MRPL18, acts as a mitochondrial import factor for the cytosolic 5S rRNA. Only the nascent unfolded cytoplasmic form is able to bind to the 5S rRNA. Formation of iron-sulfur complexes and cyanide detoxification. The chain is Thiosulfate sulfurtransferase (Tst) from Mus musculus (Mouse).